Consider the following 132-residue polypeptide: Small ribosomal subunit protein uS8 (132 aa).

It belongs to the universal ribosomal protein uS8 family. Part of the 30S ribosomal subunit. Contacts proteins S5 and S12.

One of the primary rRNA binding proteins, it binds directly to 16S rRNA central domain where it helps coordinate assembly of the platform of the 30S subunit. The polypeptide is Small ribosomal subunit protein uS8 (Bifidobacterium longum (strain NCC 2705)).